The chain runs to 275 residues: MKIVVAKNIGFCFGVERAIRTVEELLDEGKKVVTDGEIVHNKQVMEQLTKKGLKVSSEMTDGEVFVVRAHGIPKDRLEELKKIFPEVVDLTCPIVSQLFKTAQRYAKERKVIVFGKEDHPEMVALRGYAPAIVTKVPFKLEEKKVVFLSQTTSSLEEYKEFVAAMIRMNEFEEAVFLNTICPVTVNREREVEELSKICDLSIVVGGKHSSNTGKLFRIASKHSKTIWIESPDELPADVVKYGTVCVFSGTSTPNSLIENVVRKLKEMEGKRDGTI.

Cysteine 12 is a binding site for [4Fe-4S] cluster. (2E)-4-hydroxy-3-methylbut-2-enyl diphosphate-binding residues include histidine 40 and histidine 70. Dimethylallyl diphosphate is bound by residues histidine 40 and histidine 70. Histidine 40 and histidine 70 together coordinate isopentenyl diphosphate. [4Fe-4S] cluster is bound at residue cysteine 92. Histidine 119 serves as a coordination point for (2E)-4-hydroxy-3-methylbut-2-enyl diphosphate. A dimethylallyl diphosphate-binding site is contributed by histidine 119. Histidine 119 contributes to the isopentenyl diphosphate binding site. Catalysis depends on glutamate 121, which acts as the Proton donor. (2E)-4-hydroxy-3-methylbut-2-enyl diphosphate is bound at residue threonine 151. Cysteine 181 contributes to the [4Fe-4S] cluster binding site. Positions 209, 210, 211, and 251 each coordinate (2E)-4-hydroxy-3-methylbut-2-enyl diphosphate. Serine 209, serine 210, asparagine 211, and serine 251 together coordinate dimethylallyl diphosphate. Residues serine 209, serine 210, asparagine 211, and serine 251 each contribute to the isopentenyl diphosphate site.

This sequence belongs to the IspH family. The cofactor is [4Fe-4S] cluster.

The catalysed reaction is isopentenyl diphosphate + 2 oxidized [2Fe-2S]-[ferredoxin] + H2O = (2E)-4-hydroxy-3-methylbut-2-enyl diphosphate + 2 reduced [2Fe-2S]-[ferredoxin] + 2 H(+). It catalyses the reaction dimethylallyl diphosphate + 2 oxidized [2Fe-2S]-[ferredoxin] + H2O = (2E)-4-hydroxy-3-methylbut-2-enyl diphosphate + 2 reduced [2Fe-2S]-[ferredoxin] + 2 H(+). It participates in isoprenoid biosynthesis; dimethylallyl diphosphate biosynthesis; dimethylallyl diphosphate from (2E)-4-hydroxy-3-methylbutenyl diphosphate: step 1/1. Its pathway is isoprenoid biosynthesis; isopentenyl diphosphate biosynthesis via DXP pathway; isopentenyl diphosphate from 1-deoxy-D-xylulose 5-phosphate: step 6/6. Functionally, catalyzes the conversion of 1-hydroxy-2-methyl-2-(E)-butenyl 4-diphosphate (HMBPP) into a mixture of isopentenyl diphosphate (IPP) and dimethylallyl diphosphate (DMAPP). Acts in the terminal step of the DOXP/MEP pathway for isoprenoid precursor biosynthesis. In Thermotoga maritima (strain ATCC 43589 / DSM 3109 / JCM 10099 / NBRC 100826 / MSB8), this protein is 4-hydroxy-3-methylbut-2-enyl diphosphate reductase.